A 245-amino-acid polypeptide reads, in one-letter code: uncharacterized protein (245 aa).

Transmembrane regions (helical) follow at residues 29–51 (LVVL…RIGM) and 61–83 (TILF…LMLH).

The protein localises to the cell membrane. This is an uncharacterized protein from Treponema pallidum (strain Nichols).